Consider the following 252-residue polypeptide: MKTVTVRDLVVGEGAPKIIVSLMGKTITDVKSEALAYREADFDILEWRVDHFANVTTAESVLEAAGAIREIITDKPLLFTFRSAKEGGEQALTTGQYIDLNRAAVDSGLVDMIDLELFTGDDEVKATVGYAHQHNVAVIMSNHDFHKTPAAEEIVQRLRKMQELGADIPKIAVMPQTKADVLTLLTATVEMQERYADRPIITMSMSKTGVISRLAGEVFGSAATFGAVKKASAPGQISVADLRTVLTILHQA.

Residues Ser21, 46–48 (EWR), and Arg82 each bind 3-dehydroquinate. The Proton donor/acceptor role is filled by His143. Lys170 functions as the Schiff-base intermediate with substrate in the catalytic mechanism. 3-dehydroquinate is bound by residues Arg213, Ser232, and Gln236.

The protein belongs to the type-I 3-dehydroquinase family. Homodimer.

The enzyme catalyses 3-dehydroquinate = 3-dehydroshikimate + H2O. It functions in the pathway metabolic intermediate biosynthesis; chorismate biosynthesis; chorismate from D-erythrose 4-phosphate and phosphoenolpyruvate: step 3/7. Its activity is regulated as follows. Inhibited by (2R)-2-methyl-3-dehydroquinic acid. Involved in the third step of the chorismate pathway, which leads to the biosynthesis of aromatic amino acids. Catalyzes the cis-dehydration of 3-dehydroquinate (DHQ) and introduces the first double bond of the aromatic ring to yield 3-dehydroshikimate. The reaction involves the formation of an imine intermediate between the keto group of 3-dehydroquinate and the epsilon-amino group of a Lys-170 at the active site. This is 3-dehydroquinate dehydratase from Salmonella typhimurium (strain LT2 / SGSC1412 / ATCC 700720).